A 379-amino-acid polypeptide reads, in one-letter code: Succinyl-diaminopimelate desuccinylase (379 aa).

Position 70 (His-70) interacts with Zn(2+). Asp-72 is an active-site residue. Zn(2+) is bound at residue Asp-103. Glu-137 (proton acceptor) is an active-site residue. Positions 138, 166, and 352 each coordinate Zn(2+).

The protein belongs to the peptidase M20A family. DapE subfamily. As to quaternary structure, homodimer. Zn(2+) serves as cofactor. Co(2+) is required as a cofactor.

The enzyme catalyses N-succinyl-(2S,6S)-2,6-diaminopimelate + H2O = (2S,6S)-2,6-diaminopimelate + succinate. It participates in amino-acid biosynthesis; L-lysine biosynthesis via DAP pathway; LL-2,6-diaminopimelate from (S)-tetrahydrodipicolinate (succinylase route): step 3/3. Catalyzes the hydrolysis of N-succinyl-L,L-diaminopimelic acid (SDAP), forming succinate and LL-2,6-diaminopimelate (DAP), an intermediate involved in the bacterial biosynthesis of lysine and meso-diaminopimelic acid, an essential component of bacterial cell walls. The chain is Succinyl-diaminopimelate desuccinylase from Burkholderia ambifaria (strain MC40-6).